The chain runs to 122 residues: Large ribosomal subunit protein uL14 (122 aa).

It belongs to the universal ribosomal protein uL14 family. In terms of assembly, part of the 50S ribosomal subunit. Forms a cluster with proteins L3 and L19. In the 70S ribosome, L14 and L19 interact and together make contacts with the 16S rRNA in bridges B5 and B8.

Binds to 23S rRNA. Forms part of two intersubunit bridges in the 70S ribosome. The sequence is that of Large ribosomal subunit protein uL14 from Moorella thermoacetica (strain ATCC 39073 / JCM 9320).